A 359-amino-acid chain; its full sequence is UPF0284 protein MAE_56900 (359 aa).

The protein belongs to the UPF0284 family.

This Microcystis aeruginosa (strain NIES-843 / IAM M-2473) protein is UPF0284 protein MAE_56900.